The primary structure comprises 289 residues: MDGILNIFKPIGLTSFDVVRQVKKISKEKKVGHTGTLDPLASGVLPICIGKATKIVDFVMEGKKIYDAEMKLGEISDTYDREGKILKVNQVTSSENNIVEAIMSFQGEILQVPPMYSALKVNGIKLYDLARQGIEIERASRKIHIYAIKILSIDIPFVKFRVECSKGTYIRSLCYDIGNKLGCGALMYNLTRVSSGNFNSSFSIPLEDLNEQNITENIINVDKCLENYDEIAVDEKFEKLLVNGVKVSDRRLIEKIPDNKTYRVYNMERKFLGLGNLSEEGFKIIKLLT.

The active-site Nucleophile is Asp38.

This sequence belongs to the pseudouridine synthase TruB family. Type 1 subfamily.

It catalyses the reaction uridine(55) in tRNA = pseudouridine(55) in tRNA. Its function is as follows. Responsible for synthesis of pseudouridine from uracil-55 in the psi GC loop of transfer RNAs. This chain is tRNA pseudouridine synthase B, found in Clostridium acetobutylicum (strain ATCC 824 / DSM 792 / JCM 1419 / IAM 19013 / LMG 5710 / NBRC 13948 / NRRL B-527 / VKM B-1787 / 2291 / W).